The sequence spans 553 residues: Dihydroxy-acid dehydratase (553 aa).

Asp78 provides a ligand contact to Mg(2+). Cys119 is a [2Fe-2S] cluster binding site. Residues Asp120 and Lys121 each coordinate Mg(2+). Lys121 is modified (N6-carboxylysine). Position 191 (Cys191) interacts with [2Fe-2S] cluster. Position 442 (Glu442) interacts with Mg(2+). The active-site Proton acceptor is Ser468.

It belongs to the IlvD/Edd family. In terms of assembly, homodimer. It depends on [2Fe-2S] cluster as a cofactor. Mg(2+) serves as cofactor.

The catalysed reaction is (2R)-2,3-dihydroxy-3-methylbutanoate = 3-methyl-2-oxobutanoate + H2O. It carries out the reaction (2R,3R)-2,3-dihydroxy-3-methylpentanoate = (S)-3-methyl-2-oxopentanoate + H2O. Its pathway is amino-acid biosynthesis; L-isoleucine biosynthesis; L-isoleucine from 2-oxobutanoate: step 3/4. The protein operates within amino-acid biosynthesis; L-valine biosynthesis; L-valine from pyruvate: step 3/4. In terms of biological role, functions in the biosynthesis of branched-chain amino acids. Catalyzes the dehydration of (2R,3R)-2,3-dihydroxy-3-methylpentanoate (2,3-dihydroxy-3-methylvalerate) into 2-oxo-3-methylpentanoate (2-oxo-3-methylvalerate) and of (2R)-2,3-dihydroxy-3-methylbutanoate (2,3-dihydroxyisovalerate) into 2-oxo-3-methylbutanoate (2-oxoisovalerate), the penultimate precursor to L-isoleucine and L-valine, respectively. The sequence is that of Dihydroxy-acid dehydratase from Carboxydothermus hydrogenoformans (strain ATCC BAA-161 / DSM 6008 / Z-2901).